Here is a 99-residue protein sequence, read N- to C-terminus: DNA-binding protein Fis (99 aa).

The H-T-H motif DNA-binding region spans 75-94 (QTRAANMLGINRGTLRKKLK).

This sequence belongs to the transcriptional regulatory Fis family. As to quaternary structure, homodimer.

In terms of biological role, activates ribosomal RNA transcription. Plays a direct role in upstream activation of rRNA promoters. The protein is DNA-binding protein Fis of Haemophilus influenzae (strain PittEE).